Consider the following 434-residue polypeptide: Putative ZDHHC-type palmitoyltransferase 1 (434 aa).

2 consecutive transmembrane segments (helical) span residues 25–45 and 53–73; these read AYFI…LIFV and ITAA…IFLI. Residues 115–165 enclose the DHHC domain; the sequence is KWCETCCLYRPPRANHCGICNNCVERFDHHCPWVGNCIGRRNYQTFLYFLY. The S-palmitoyl cysteine intermediate role is filled by C145. The helical transmembrane segment at 160–180 threads the bilayer; that stretch reads FLYFLYSLGFLCIWIMGFCVA. Residues N207, N216, N274, N346, N362, N373, N381, N387, and N393 are each glycosylated (N-linked (GlcNAc...) asparagine). The tract at residues 262-330 is disordered; that stretch reads TIPTPNNING…ISPPQMLQRQ (69 aa). Low complexity predominate over residues 267–316; sequence NNINGNNNNSINNNNNNNNNNNNNNNNNNNNNNNNNNINNGNSGGTTNNG. The tract at residues 365 to 434 is disordered; it reads TISEDKPKNL…SLNHELQVNV (70 aa). Residues 373-387 show a composition bias toward low complexity; the sequence is NLSNSNNNNNTNNKN. The span at 409 to 419 shows a compositional bias: basic and acidic residues; the sequence is DDFKSDNDKEI. N420 is a glycosylation site (N-linked (GlcNAc...) asparagine). Positions 420–434 are enriched in polar residues; the sequence is NSSSLSLNHELQVNV.

Belongs to the DHHC palmitoyltransferase family.

It localises to the membrane. The enzyme catalyses L-cysteinyl-[protein] + hexadecanoyl-CoA = S-hexadecanoyl-L-cysteinyl-[protein] + CoA. The polypeptide is Putative ZDHHC-type palmitoyltransferase 1 (Dictyostelium discoideum (Social amoeba)).